Reading from the N-terminus, the 384-residue chain is tRNA-specific 2-thiouridylase MnmA (384 aa).

ATP-binding positions include 30-37 (GMSGGVDS) and M56. The tract at residues 116-118 (NPD) is interaction with target base in tRNA. The active-site Nucleophile is C121. Residues C121 and C218 are joined by a disulfide bond. G146 is a binding site for ATP. The segment at 168–170 (KDQ) is interaction with tRNA. C218 serves as the catalytic Cysteine persulfide intermediate. The tract at residues 330–331 (RY) is interaction with tRNA.

The protein belongs to the MnmA/TRMU family.

The protein resides in the cytoplasm. It carries out the reaction S-sulfanyl-L-cysteinyl-[protein] + uridine(34) in tRNA + AH2 + ATP = 2-thiouridine(34) in tRNA + L-cysteinyl-[protein] + A + AMP + diphosphate + H(+). In terms of biological role, catalyzes the 2-thiolation of uridine at the wobble position (U34) of tRNA, leading to the formation of s(2)U34. The sequence is that of tRNA-specific 2-thiouridylase MnmA from Haemophilus ducreyi (strain 35000HP / ATCC 700724).